The primary structure comprises 1070 residues: DNA-directed RNA polymerase subunit beta (1070 aa).

This sequence belongs to the RNA polymerase beta chain family. As to quaternary structure, in plastids the minimal PEP RNA polymerase catalytic core is composed of four subunits: alpha, beta, beta', and beta''. When a (nuclear-encoded) sigma factor is associated with the core the holoenzyme is formed, which can initiate transcription.

The protein resides in the plastid. It localises to the chloroplast. The enzyme catalyses RNA(n) + a ribonucleoside 5'-triphosphate = RNA(n+1) + diphosphate. Functionally, DNA-dependent RNA polymerase catalyzes the transcription of DNA into RNA using the four ribonucleoside triphosphates as substrates. The protein is DNA-directed RNA polymerase subunit beta of Chaetosphaeridium globosum (Charophycean green alga).